Consider the following 760-residue polypeptide: General transcription and DNA repair factor IIH helicase subunit XPD (760 aa).

Residues 7–283 (GLLVYFPYDY…KETDEQRLRD (277 aa)) form the Helicase ATP-binding domain. 42-49 (MPSGTGKT) lines the ATP pocket. [4Fe-4S] cluster-binding residues include cysteine 116, cysteine 134, cysteine 155, and cysteine 190. The DEAH box motif lies at 234–237 (DEAH). Positions 438-637 (MDASLAIKPV…TQSRILKARL (200 aa)) are mediates interaction with MMS19. The Nuclear localization signal signature appears at 682 to 695 (KRFARGDKRGKLPR).

The protein belongs to the helicase family. RAD3/XPD subfamily. In terms of assembly, component of the 7-subunit TFIIH core complex composed of XPB/ERCC3, XPD/ERCC2, GTF2H1, GTF2H2, GTF2H3, GTF2H4 and GTF2H5, which is active in NER. The core complex associates with the 3-subunit CDK-activating kinase (CAK) module composed of CCNH/cyclin H, CDK7 and MNAT1 to form the 10-subunit holoenzyme (holo-TFIIH) active in transcription. Interacts with GTF2H2 (p44) which stimulates the 5'-3' helicase activity of this subunit. Component of the MMXD complex, which includes CIAO1, ERCC2, CIAO2B, MMS19 and SLC25A5. Interacts with CIAO1 and CIAO2B; the interaction WITH CIAO2B is direct. Interacts with ATF7IP. Interacts directly with MMS19. Part of TBP-based Pol II pre-initiation complex (PIC), in which Pol II core assembles with general transcription factors and other specific initiation factors including GTF2E1, GTF2E2, GTF2F1, GTF2F2, TCEA1, ERCC2, ERCC3, GTF2H2, GTF2H3, GTF2H4, GTF2H5, GTF2A1, GTF2A2, GTF2B and TBP; this large multi-subunit PIC complex mediates DNA unwinding and targets Pol II core to the transcription start site where the first phosphodiester bond forms. (Microbial infection) Interacts with Epstein-Barr virus EBNA2. Mg(2+) is required as a cofactor. [4Fe-4S] cluster serves as cofactor. In terms of processing, ISGylated.

The protein localises to the nucleus. The protein resides in the cytoplasm. It localises to the cytoskeleton. Its subcellular location is the spindle. The enzyme catalyses Couples ATP hydrolysis with the unwinding of duplex DNA at the replication fork by translocating in the 5'-3' direction. This creates two antiparallel DNA single strands (ssDNA). The leading ssDNA polymer is the template for DNA polymerase III holoenzyme which synthesizes a continuous strand.. It carries out the reaction ATP + H2O = ADP + phosphate + H(+). Interaction with GTF2H2 (p44) results in stimulation of the 5'-3' helicase activity of this subunit. DNA unwinding by this subunit in TFIIH is stimulated 4-fold by XPA and 20-fold by ERCC5/XPG. Functionally, ATP-dependent 5'-3' DNA helicase. Component of the general transcription and DNA repair factor IIH (TFIIH) core complex, not absolutely essential for minimal transcription in vitro. Required for transcription-coupled nucleotide excision repair (NER) of damaged DNA; recognizes damaged bases. Sequestered in chromatin on UV-damaged DNA. When complexed to CDK-activating kinase (CAK), involved in transcription by RNA polymerase II. In NER, TFIIH acts by opening DNA around the lesion to allow the excision of the damaged oligonucleotide and its replacement by a new DNA fragment. The ATP-dependent helicase activity of XPD/ERCC2 is required for DNA opening. Involved in DNA lesion verification. In transcription, TFIIH has an essential role in transcription initiation. When the pre-initiation complex (PIC) has been established, TFIIH is required for promoter opening and promoter escape. Phosphorylation of the C-terminal tail (CTD) of the largest subunit of RNA polymerase II by the kinase module CAK controls the initiation of transcription. XPD/ERCC2 acts by forming a bridge between CAK and the core-TFIIH complex. The structure of the TFIIH transcription complex differs from the NER-TFIIH complex; large movements by XPD/ERCC2 and XPB/ERCC3 are stabilized by XPA which allow this subunit to contact ssDNA. Involved in the regulation of vitamin-D receptor activity. As part of the mitotic spindle-associated MMXD complex it plays a role in chromosome segregation. Might have a role in aging process and could play a causative role in the generation of skin cancers. This is General transcription and DNA repair factor IIH helicase subunit XPD (ERCC2) from Homo sapiens (Human).